A 716-amino-acid chain; its full sequence is Phospholipid phosphatase-related protein type 3 (716 aa).

A run of 3 helical transmembrane segments spans residues 18-38 (LPCFYFVELPIVASSVVSLYF), 70-90 (LIPLLMLLSLAFAAPAASIMV), and 131-151 (FVGVHVFGLCATALVTDVIQL). Asn167 carries an N-linked (GlcNAc...) asparagine glycan. 3 helical membrane passes run 205–225 (HATLSAFAAVYVSMYFNSVIS), 231–251 (LKPILVFAFAIAAGVCGLTQI), and 261–281 (VYAGFLIGAGIAAYLACHAVG). A disordered region spans residues 311-334 (SMYQQNKSVSTDELGPPGRLEGVP). Positions 312 to 321 (MYQQNKSVST) are enriched in polar residues. N-linked (GlcNAc...) asparagine glycosylation is present at Asn316. A phosphoserine mark is found at Ser320 and Ser351. Thr374 is modified (phosphothreonine). The tract at residues 416–488 (GRGLGLPDEA…RVILPPRPGP (73 aa)) is disordered. Phosphoserine is present on Ser426. Positions 437-460 (VAEEEEEEEEEEEEEEEEEEEEEG) are enriched in acidic residues. Ser506 bears the Phosphoserine mark. Positions 548–589 (AMSKAAGGPKAETASSSSASSDSSQYRSPSDRDSASIVTIDA) are disordered. The span at 562 to 575 (SSSSASSDSSQYRS) shows a compositional bias: low complexity. Phosphoserine is present on Ser641. Residues 664 to 694 (GEGLPPPGASEGALGAGSRESTLRRQVGALG) form a disordered region.

It belongs to the PA-phosphatase related phosphoesterase family.

The protein localises to the membrane. This Rattus norvegicus (Rat) protein is Phospholipid phosphatase-related protein type 3.